The sequence spans 472 residues: Zinc finger CCCH domain-containing protein 59 (472 aa).

The disordered stretch occupies residues 87 to 139; sequence YKSPEGNRPRQNAANGSAKPQVIGTGHRVSNQPRKNAVYGPRSSSLSDTRGCG. The segment at 145–172 adopts a C3H1-type zinc-finger fold; it reads SPKKSVCNFWKDGNCKKGEKCQFLHSWS. WD repeat units lie at residues 185-226, 261-301, 310-347, 350-387, and 436-472; these read GHKN…RSIN, HLEG…SDPF, HHSG…CRMT, QHIG…SLKV, and FSTQ…GTKV.

The sequence is that of Zinc finger CCCH domain-containing protein 59 (ZFWD3) from Arabidopsis thaliana (Mouse-ear cress).